The following is a 340-amino-acid chain: Major histocompatibility complex class I-related protein 1 (340 aa).

The first 22 residues, 1-22 (MGELTAFLLPLIIVLMVKHSNS), serve as a signal peptide directing secretion. The tract at residues 23–109 (RTHSLRYFRL…KRLQRHYNHS (87 aa)) is alpha-1. The tract at residues 23–201 (RTHSLRYFRL…EYGKDTLQRT (179 aa)) is antigen-binding cleft. At 23 to 302 (RTHSLRYFRL…QESEAIPLVM (280 aa)) the chain is on the extracellular side. Y29 and R31 together coordinate 8-(9H-purin-6-yl)-2-oxa-8-azabicyclo[3.3.1]nona-3,6-diene-4,6-dicarbaldehyde. Positions 31, 46, and 65 each coordinate 5-(2-oxoethylideneamino)-6-(D-ribitylamino)uracil. The 5-(2-oxopropylideneamino)-6-(D-ribitylamino)uracil site is built by R31, S46, and K65. Residues R31, S46, and K65 each coordinate 7-hydroxy-6-methyl-8-(1-D-ribityl)lumazine. The 8-(9H-purin-6-yl)-2-oxa-8-azabicyclo[3.3.1]nona-3,6-diene-4,6-dicarbaldehyde site is built by K65 and H80. K65 contacts 2-amino-4-oxopteridine-6-carbaldehyde. Pyridoxal is bound at residue K65. The N-linked (GlcNAc...) asparagine glycan is linked to N107. Residues 110 to 201 (GSHTYQRMIG…EYGKDTLQRT (92 aa)) form an alpha-2 region. R116 lines the 8-(9H-purin-6-yl)-2-oxa-8-azabicyclo[3.3.1]nona-3,6-diene-4,6-dicarbaldehyde pocket. 5-(2-oxoethylideneamino)-6-(D-ribitylamino)uracil-binding residues include R116, Y174, and Q175. Positions 116, 174, and 175 each coordinate 5-(2-oxopropylideneamino)-6-(D-ribitylamino)uracil. Residues R116, Y174, and Q175 each contribute to the 7-hydroxy-6-methyl-8-(1-D-ribityl)lumazine site. Disulfide bonds link C120–C183 and C222–C278. The interval 202–293 (EPPLVRVNRK…GVHVVLQVPQ (92 aa)) is alpha-3. Residues 203–282 (PPLVRVNRKE…SNLYSCHVEH (80 aa)) enclose the Ig-like C1-type domain. Residues 294–302 (ESEAIPLVM) are connecting peptide. The helical transmembrane segment at 303–323 (KAVSGSIVFVIVLAGVGVLVW) threads the bilayer. The Cytoplasmic segment spans residues 324 to 340 (RRRPREQNGAVYLPTPD).

It belongs to the MHC class I family. As to quaternary structure, heterotrimer that consists of MR1, B2M and metabolite antigen. Major classes of metabolite ligands presented by MR1 include riboflavin-related antigens, pyrimidines and ribityl lumazines, nucleobase adducts and folate derivatives. Forms reversible covalent Schiff base complexes with microbial pyrimidine-based metabolite, which serves as a molecular switch triggering complete folding, stable association with B2M and translocation of the ternary complex from endoplasmic reticulum to the plasma membrane. Alternatively, forms non-Schiff base complexes with ribityl lumazines. On antigen-presenting cells, the ternary complex interacts with TCR on MR1-restricted T cells. Interacts with TAPBP and TAPBPL chaperones in the endoplasmic reticulum. TAPBP associated or not with MHC class I peptide loading complex binds ligand-free MR1 or MR1-B2M complex, providing for stable MR1 pools ready for metabolite antigen processing. TAPBPL interacts with MR1 in a ligand-independent way; this interaction may stabilize MR1 pool and facilitate ligand loading and dissociation. Structurally, MR1-B2M heterodimer adopts a topology similar to classical MHC class I molecules, with alpha-1 and alpha-2 domains of MR1 forming the antigen-binding cleft composed of two alpha-helices resting on a floor of 7-stranded anti-parallel beta-pleated sheet. MR1-B2M heterodimer (via alpha-helices) interacts with TCR (via CDR domains). N-glycosylated.

Its subcellular location is the cell membrane. It is found in the endoplasmic reticulum membrane. The protein resides in the golgi apparatus membrane. The protein localises to the early endosome membrane. It localises to the late endosome membrane. Its function is as follows. Antigen-presenting molecule specialized in displaying microbial pyrimidine-based metabolites to alpha-beta T cell receptors (TCR) on innate-type mucosal-associated invariant T (MAIT) cells. In complex with B2M preferentially presents riboflavin-derived metabolites to semi-invariant TCRs on MAIT cells, guiding immune surveillance of the microbial metabolome at mucosal epithelial barriers. Signature pyrimidine-based microbial antigens are generated via non-enzymatic condensation of metabolite intermediates of the riboflavin pathway with by-products arising from other metabolic pathways such as glycolysis. Typical potent antigenic metabolites are 5-(2-oxoethylideneamino)-6-D-ribitylaminouracil (5-OE-RU) and 5-(2-oxopropylideneamino)-6-D-ribitylaminouracil (5-OP-RU), products of condensation of 5-amino-6-D-ribityaminouracil (5-A-RU) with glyoxal or methylglyoxal by-products, respectively. May present microbial antigens to various MAIT cell subsets, providing for unique recognition of diverse microbes, including pathogens that do not synthesize riboflavin. Upon antigen recognition, elicits rapid innate-type MAIT cell activation to eliminate pathogenic microbes by directly killing infected cells. During T cell development, drives thymic selection and post-thymic terminal differentiation of MAIT cells in a process dependent on commensal microflora. Acts as an immune sensor of cancer cell metabolome. May present a tumor-specific or -associated metabolite essential for cancer cell survival to a pan-cancer TCR on a non-MAIT CD8-positive T cell clone, triggering T cell-mediated killing of a wide range of cancer cell types. May present tumor-enriched pyridoxal and pyridoxal 5'-phosphate antigens, enabling preferential recognition of cancer cells. Presents nucleobase carbonyl adducts generated during oxidative stress. Captures M3Ade, a nucleobase adduct composed of one adenine modified by a malondialdehyde trimer, for recognition by MR1-restricted T cell clones expressing a polyclonal TCR repertoire. The sequence is that of Major histocompatibility complex class I-related protein 1 from Pongo abelii (Sumatran orangutan).